We begin with the raw amino-acid sequence, 262 residues long: Methanethiol S-methyltransferase (262 aa).

5 helical membrane-spanning segments follow: residues 22–42 (LYSL…IGFV), 55–75 (PGAS…LFAV), 100–120 (ATYV…WQPI), 134–154 (AVLT…TFLI), and 195–215 (GFLM…VFAL).

It belongs to the nurim family.

It is found in the membrane. It catalyses the reaction methanethiol + S-adenosyl-L-methionine = dimethyl sulfide + S-adenosyl-L-homocysteine + H(+). In terms of biological role, catalyzes the methylation of methanethiol (MeSH) to yield dimethylsulphide (DMS). This Pseudomonas deceptionensis protein is Methanethiol S-methyltransferase.